We begin with the raw amino-acid sequence, 485 residues long: NADH-quinone oxidoreductase subunit N (485 aa).

The next 14 helical transmembrane spans lie at leucine 8 to isoleucine 28, phenylalanine 35 to valine 55, leucine 75 to leucine 95, glutamate 104 to histidine 124, leucine 125 to tyrosine 145, tyrosine 159 to alanine 179, isoleucine 203 to phenylalanine 223, proline 235 to isoleucine 255, threonine 271 to glutamine 291, leucine 297 to glutamine 317, valine 326 to leucine 346, leucine 383 to valine 403, glutamate 406 to leucine 426, and methionine 455 to isoleucine 475.

It belongs to the complex I subunit 2 family. NDH-1 is composed of 13 different subunits. Subunits NuoA, H, J, K, L, M, N constitute the membrane sector of the complex.

It localises to the cell inner membrane. The catalysed reaction is a quinone + NADH + 5 H(+)(in) = a quinol + NAD(+) + 4 H(+)(out). In terms of biological role, NDH-1 shuttles electrons from NADH, via FMN and iron-sulfur (Fe-S) centers, to quinones in the respiratory chain. The immediate electron acceptor for the enzyme in this species is believed to be ubiquinone. Couples the redox reaction to proton translocation (for every two electrons transferred, four hydrogen ions are translocated across the cytoplasmic membrane), and thus conserves the redox energy in a proton gradient. The polypeptide is NADH-quinone oxidoreductase subunit N (Photorhabdus laumondii subsp. laumondii (strain DSM 15139 / CIP 105565 / TT01) (Photorhabdus luminescens subsp. laumondii)).